We begin with the raw amino-acid sequence, 179 residues long: Probable chemoreceptor glutamine deamidase CheD 2 (179 aa).

It belongs to the CheD family.

It catalyses the reaction L-glutaminyl-[protein] + H2O = L-glutamyl-[protein] + NH4(+). In terms of biological role, probably deamidates glutamine residues to glutamate on methyl-accepting chemotaxis receptors (MCPs), playing an important role in chemotaxis. The chain is Probable chemoreceptor glutamine deamidase CheD 2 from Ruegeria sp. (strain TM1040) (Silicibacter sp.).